The primary structure comprises 392 residues: MSSDDERDEKELSLTSPEVVTKYKSAAEIVNKALQVVLAECKPKAKIVDICEKGDSFIKEQTASMYKNSKKKIERGVAFPTCISVNNTVGHFSPLASDESVLEDGDMVKIDMGCHIDGFIALVGHTHVLQEGPLSGRKADVIAAANTAADVALRLVRPGKKNTDVTEAIQKVAAAYDCKIVEGVLSHQLKQHVIDGNKVVLSVSSPETTVDEVEFEENEVYAIDIVASTGDGKPKLLDEKQTTIYKKDESVNYQLKMKASRFIISEIKQNFPRMPFTARSLEEKRARLGLVECVNHGHLQPYPVLYEKPGDFVAQIKFTVLLMPNGSDRITSHTLQELPKKTIEDPEIKGWLALGIKKKKGGGKKKKAQKAGEKGEASTEAEPMDASSNAQE.

2 necessary for nucleolar localization regions span residues 1–50 (MSSD…IVDI) and 298–392 (HLQP…NAQE). An RNA-binding region spans residues 48–56 (VDICEKGDS). An interaction with RNA region spans residues 355–372 (GIKKKKGGGKKKKAQKAG). The Nuclear localization signal signature appears at 357-367 (KKKKGGGKKKK). Residues 358–369 (KKKGGGKKKKAQ) are compositionally biased toward basic residues. The segment at 358–392 (KKKGGGKKKKAQKAGEKGEASTEAEPMDASSNAQE) is disordered.

This sequence belongs to the peptidase M24 family. In terms of assembly, component of a ribonucleoprotein complex. Interacts with REIL1 and REIL2. Strongly expressed in calls, roots and flowers, to a lower extent, in stems and siliques, but hardly detectable in leaves.

It is found in the nucleus. Its function is as follows. Binds RNA. Associates with 28S, 18S and 5.8S mature rRNAs, several rRNA precursors and probably U3 small nucleolar RNA. May be involved in regulation of intermediate and late steps of rRNA processing. May be involved in ribosome assembly. Required for expression of cell cycle genes such as CYCD3-1, RNR2A and CDKB1-1. Promotes, in a dose- and auxin-dependent manner, organ growth by stimulating both cell proliferation and expansion, via the regulation of RBR1 levels. This Arabidopsis thaliana (Mouse-ear cress) protein is ERBB-3 BINDING PROTEIN 1.